The chain runs to 422 residues: Protein phosphatase methylesterase 1 (422 aa).

The segment at 1-27 (MSDMFRKSVLNKLPHLPPTRAPWADES) is disordered. Active-site residues include Ser207, Asp234, and His371.

This sequence belongs to the AB hydrolase superfamily.

The enzyme catalyses [phosphatase 2A protein]-C-terminal L-leucine methyl ester + H2O = [phosphatase 2A protein]-C-terminal L-leucine + methanol + H(+). In terms of biological role, demethylates proteins that have been reversibly carboxymethylated. Demethylates the phosphatase PP2A catalytic subunit. The protein is Protein phosphatase methylesterase 1 (PPE1) of Cryptococcus neoformans var. neoformans serotype D (strain JEC21 / ATCC MYA-565) (Filobasidiella neoformans).